The chain runs to 660 residues: Cysteine-rich receptor-like protein kinase 22 (660 aa).

The N-terminal stretch at 1–24 (MKQRSFLSILCFILLAFGVASVSA) is a signal peptide. 2 consecutive Gnk2-homologous domains span residues 25 to 128 (QTCI…NISF) and 137 to 250 (IEPQ…LFTF). Over 25 to 294 (QTCIENRKYF…DSRGVSAGIV (270 aa)) the chain is Extracellular. Asn37, Asn53, Asn105, Asn125, Asn191, Asn230, and Asn256 each carry an N-linked (GlcNAc...) asparagine glycan. The span at 264–273 (KPPMNVPRPP) shows a compositional bias: pro residues. The disordered stretch occupies residues 264–283 (KPPMNVPRPPSVGHGANTTD). N-linked (GlcNAc...) asparagine glycans are attached at residues Asn280 and Asn284. A helical membrane pass occupies residues 295-315 (VVITVPAVVIVLILVVLGFFI). The Cytoplasmic portion of the chain corresponds to 316-660 (CWRRKSLQRT…DPLSEGLESG (345 aa)). Residues 353-632 (FSKSNKLGEG…IVSMLTSNTI (280 aa)) form the Protein kinase domain. ATP is bound by residues 359 to 367 (LGEGRFGEV) and Lys381. Phosphotyrosine is present on Tyr426. Asp478 functions as the Proton acceptor in the catalytic mechanism. Phosphoserine is present on Ser482. Residue Thr518 is modified to Phosphothreonine. Tyr526 carries the phosphotyrosine modification.

It belongs to the protein kinase superfamily. Ser/Thr protein kinase family. CRK subfamily.

The protein localises to the membrane. The catalysed reaction is L-seryl-[protein] + ATP = O-phospho-L-seryl-[protein] + ADP + H(+). The enzyme catalyses L-threonyl-[protein] + ATP = O-phospho-L-threonyl-[protein] + ADP + H(+). The chain is Cysteine-rich receptor-like protein kinase 22 (CRK22) from Arabidopsis thaliana (Mouse-ear cress).